We begin with the raw amino-acid sequence, 258 residues long: Tryptophan synthase alpha chain (258 aa).

Active-site proton acceptor residues include E44 and D55.

The protein belongs to the TrpA family. Tetramer of two alpha and two beta chains.

It catalyses the reaction (1S,2R)-1-C-(indol-3-yl)glycerol 3-phosphate + L-serine = D-glyceraldehyde 3-phosphate + L-tryptophan + H2O. The protein operates within amino-acid biosynthesis; L-tryptophan biosynthesis; L-tryptophan from chorismate: step 5/5. Its function is as follows. The alpha subunit is responsible for the aldol cleavage of indoleglycerol phosphate to indole and glyceraldehyde 3-phosphate. The protein is Tryptophan synthase alpha chain of Petrotoga mobilis (strain DSM 10674 / SJ95).